The primary structure comprises 360 residues: MARRPRNSRAWRFVLSGVRRDQDARSPTLPAEEEAWGYDSDGQHSNSDSDTDLLHLPPSIPSAVPVTGESYCDCDSQNDPYCSSLHTFHQIKSCQCGEEDNYFDWVWDDCSKSTATVLSCDNRKVSFHMEYSCGTAAIRGNRMLTEGQHFWEIKMTSPVYGTDMMVGIGTSDVNLDKYRHTFCSLLGKDAESWGLSYTGLLQHKGDKSNFSSRFGQGSIIGVHLDTWHGVLTFYKNRKCIGVAATQLRNKKLFPMVCSTAAKSSMKVIRSCCCRTSLQYLCCARLRQLLPDSVDSLEVLPLPPGLKQVLGNKLGWVLQMGSNRSNQHKGDTSATTSCGSDSDSSCTPGQDDCQRKRCRRI.

Positions 20–55 are disordered; it reads RDQDARSPTLPAEEEAWGYDSDGQHSNSDSDTDLLH. The B30.2/SPRY domain maps to 85-274; it reads LHTFHQIKSC…MKVIRSCCCR (190 aa). Residues 264 to 315 form the SOCS box domain; that stretch reads SMKVIRSCCCRTSLQYLCCARLRQLLPDSVDSLEVLPLPPGLKQVLGNKLGW. The disordered stretch occupies residues 323–350; it reads RSNQHKGDTSATTSCGSDSDSSCTPGQD. Low complexity predominate over residues 331 to 346; that stretch reads TSATTSCGSDSDSSCT.

The protein belongs to the SPSB family. As to quaternary structure, substrate-recognition component of the ECS(SPSB3) complex, composed of spsb3, cul5, elob, elob and rnf7/rbx2.

The protein resides in the nucleus. The protein operates within protein modification; protein ubiquitination. Its function is as follows. Substrate-recognition component of a cullin-5-RING E3 ubiquitin-protein ligase complex (ECS complex, also named CRL5 complex), which mediates the ubiquitination and subsequent proteasomal degradation of target proteins. In Xenopus tropicalis (Western clawed frog), this protein is SPRY domain-containing SOCS box protein 3 (spsb3).